The sequence spans 246 residues: Homeobox protein Hox-B4a (246 aa).

Positions 23 to 125 are disordered; it reads YSQSDYLPSH…SQNTSTVSSR (103 aa). Composition is skewed to polar residues over residues 39–48 and 112–123; these read AQRQDPSFQH and QTPTSQNTSTVS. Residues 130–135 carry the Antp-type hexapeptide motif; it reads VYPWMK. Residues 151–210 constitute a DNA-binding region (homeobox); sequence PKRSRTAYTRQQVLELEKEFHYNRYLTRRRRVEIAHTLCLSERQIKIWFQNRRMKWKKDH. Residues 210–246 are disordered; sequence HKLPNTKIRSNSASTNSSGCPTLCSNQSRASGPPPSL. Polar residues predominate over residues 216-239; sequence KIRSNSASTNSSGCPTLCSNQSRA.

This sequence belongs to the Antp homeobox family. Deformed subfamily.

The protein resides in the nucleus. Its function is as follows. Sequence-specific transcription factor which is part of a developmental regulatory system that provides cells with specific positional identities on the anterior-posterior axis. The polypeptide is Homeobox protein Hox-B4a (hoxb4a) (Danio rerio (Zebrafish)).